Consider the following 90-residue polypeptide: Small ribosomal subunit protein bS16 (90 aa).

Belongs to the bacterial ribosomal protein bS16 family.

The sequence is that of Small ribosomal subunit protein bS16 from Streptococcus agalactiae serotype III (strain NEM316).